Reading from the N-terminus, the 404-residue chain is MEDSNSYIRVSGFVLGSLMFQHLNSDSDVEGLILGETKAEERSNITDSQIDNIQFEHTINIQKHISCRKLNSFYNRIGEVNRDEIRHILSNYKEENVIGWYKQRRNTDQQITFREQVVHENLKRALSNHELIFLLLTPSEITTSGSTHKLEYAVYRSHGSQYCSVPVLVSNLGLLEEQDYWRLSASCSSVNYNHAVRKHRSKFFSSDGSLHEVDEINDMNNSLQGELKMACKKVEESERLVEKLLADVSDLRRMVNERKQELREISADGASTPAQPRENVLLCEVIKTLFPGASLLQTQALNFQGFPLPEFCCSTDHGIDIATTLPLILSHTLPKARKGRLGRGGGTSWRKCPLRESSEVPKRRKGMLEETDETLSVSGSETEEDLIPANRNGNNLDVSNSPVF.

The 155-residue stretch at 7–161 folds into the MPN domain; it reads YIRVSGFVLG…YAVYRSHGSQ (155 aa). Positions 219-268 form a coiled coil; that stretch reads MNNSLQGELKMACKKVEESERLVEKLLADVSDLRRMVNERKQELREISAD. Residues 339 to 404 form a disordered region; sequence GRLGRGGGTS…NLDVSNSPVF (66 aa). Positions 391-404 are enriched in polar residues; the sequence is RNGNNLDVSNSPVF. Serine 401 is modified (phosphoserine). A pSXXF motif motif is present at residues 401–404; it reads SPVF.

This sequence belongs to the FAM175 family. Abraxas subfamily. As to quaternary structure, component of the BRCA1-A complex. Component of the BRISC complex. Homodimer. Interacts directly (when phosphorylated at Ser-401) with brca1. The phosphorylated homodimer can interact directly with two brca1 chains, giving rise to a heterotetramer. Phosphorylation of Ser-401 of the pSXXF motif by ATM or ATR constitutes a specific recognition motif for the BRCT domain of BRCA1.

It is found in the nucleus. In terms of biological role, involved in DNA damage response and double-strand break (DSB) repair. Component of the BRCA1-A complex, acting as a central scaffold protein that assembles the various components of the complex and mediates the recruitment of brca1. The BRCA1-A complex specifically recognizes 'Lys-63'-linked ubiquitinated histones H2A and H2AX at DNA lesion sites, leading to target the brca1-bard1 heterodimer to sites of DNA damage at DSBs. This complex also possesses deubiquitinase activity that specifically removes 'Lys-63'-linked ubiquitin on histones H2A and H2AX. The polypeptide is BRCA1-A complex subunit Abraxas 1 (Salmo salar (Atlantic salmon)).